The primary structure comprises 185 residues: Elongation factor P (185 aa).

The protein belongs to the elongation factor P family.

It localises to the cytoplasm. The protein operates within protein biosynthesis; polypeptide chain elongation. Involved in peptide bond synthesis. Stimulates efficient translation and peptide-bond synthesis on native or reconstituted 70S ribosomes in vitro. Probably functions indirectly by altering the affinity of the ribosome for aminoacyl-tRNA, thus increasing their reactivity as acceptors for peptidyl transferase. The protein is Elongation factor P of Bordetella petrii (strain ATCC BAA-461 / DSM 12804 / CCUG 43448).